A 187-amino-acid chain; its full sequence is Lysozyme C-like protein DDB_G0288143 (187 aa).

The first 23 residues, 1-23 (MKVSNLISTITIASALCLSLTNA), serve as a signal peptide directing secretion. Disulfide bonds link Cys50–Cys125, Cys74–Cys82, and Cys78–Cys97. Glu55 is a catalytic residue. The segment at 133–187 (QHGSHSSTSRDSSSSSSRDSTGTGYSSSGSGTSGSGSNSGQTGHFIPGQSGHGLN) is disordered. Residues 136–175 (SHSSTSRDSSSSSSRDSTGTGYSSSGSGTSGSGSNSGQTG) show a composition bias toward low complexity.

The protein belongs to the glycosyl hydrolase 22 family.

This chain is Lysozyme C-like protein DDB_G0288143, found in Dictyostelium discoideum (Social amoeba).